The chain runs to 428 residues: Ammonium transporter AmtB (428 aa).

Positions Met1–Ala22 are cleaved as a signal peptide. Residues Ala23–Asn32 are Periplasmic-facing. A helical transmembrane segment spans residues Ala33–Tyr54. Over Gly55–Ser65 the chain is Cytoplasmic. Residues Met66–Phe90 form a helical membrane-spanning segment. The Periplasmic portion of the chain corresponds to Gly91–Gln119. A helical transmembrane segment spans residues Tyr120–Ala142. Topologically, residues Glu143 to Arg146 are cytoplasmic. A helical transmembrane segment spans residues Phe147 to Gly171. Residues Gly172 to Gly185 lie on the Periplasmic side of the membrane. Residues Gly186 to Ala201 form a helical membrane-spanning segment. Residues Tyr202–Pro221 lie on the Cytoplasmic side of the membrane. Residues Met222–Ser241 form a helical membrane-spanning segment. An NH4(+)-binding site is contributed by Ser241. At Ala242–Ile248 the chain is on the periplasmic side. Residues Ala249–Ala273 form a helical membrane-spanning segment. At Leu274–Ser279 the chain is on the cytoplasmic side. The chain crosses the membrane as a helical span at residues Leu280 to Tyr300. Residues Ile301–Gly302 are Periplasmic-facing. The helical transmembrane segment at Val303–Val321 threads the bilayer. Topologically, residues Thr322 to Pro333 are cytoplasmic. The helical transmembrane segment at Cys334 to Ala355 threads the bilayer. Residues Ala356 to Met370 are Periplasmic-facing. A helical transmembrane segment spans residues Gly371–Ala399. Residues Asp400–Ala428 are Cytoplasmic-facing.

The protein belongs to the ammonia transporter channel (TC 1.A.11.2) family. As to quaternary structure, homotrimer. In response to elevation of the extracellular ammonium concentration, interacts and forms a complex with GlnK.

It is found in the cell inner membrane. Its activity is regulated as follows. In the presence of high extracellular ammonium concentrations, transport activity is inhibited by interaction with the regulatory protein GlnK. Formation of the GlnK-AmtB complex is influenced by intracellular pools of the effector molecules ATP, ADP, Mg(2+) and 2-oxoglutarate. The GlnK-AmtB interaction is also controlled by the level of intracellular glutamine and the uridylylation status of GlnK. Involved in the uptake of ammonium/ammonia (NH(4)(+)/NH(3)). Transport is electrogenic. Following sequestration of NH(4)(+) at the periplasmic face, NH(4)(+) is deprotonated and neutral NH(3) is transported into the cytoplasm. Neutral NH(3) and charged H(+) are carried separately across the membrane on a unique two-lane pathway, before recombining to NH(4)(+) inside the cell. The chain is Ammonium transporter AmtB (amtB) from Escherichia coli O157:H7.